We begin with the raw amino-acid sequence, 165 residues long: 6,7-dimethyl-8-ribityllumazine synthase (165 aa).

5-amino-6-(D-ribitylamino)uracil-binding positions include phenylalanine 22, 56–58 (SME), and 80–82 (AVI). (2S)-2-hydroxy-3-oxobutyl phosphate is bound at residue 85-86 (ET). Histidine 88 (proton donor) is an active-site residue. 5-amino-6-(D-ribitylamino)uracil is bound at residue phenylalanine 113. Arginine 127 is a binding site for (2S)-2-hydroxy-3-oxobutyl phosphate.

Belongs to the DMRL synthase family.

The catalysed reaction is (2S)-2-hydroxy-3-oxobutyl phosphate + 5-amino-6-(D-ribitylamino)uracil = 6,7-dimethyl-8-(1-D-ribityl)lumazine + phosphate + 2 H2O + H(+). It participates in cofactor biosynthesis; riboflavin biosynthesis; riboflavin from 2-hydroxy-3-oxobutyl phosphate and 5-amino-6-(D-ribitylamino)uracil: step 1/2. Its function is as follows. Catalyzes the formation of 6,7-dimethyl-8-ribityllumazine by condensation of 5-amino-6-(D-ribitylamino)uracil with 3,4-dihydroxy-2-butanone 4-phosphate. This is the penultimate step in the biosynthesis of riboflavin. In Thermotoga sp. (strain RQ2), this protein is 6,7-dimethyl-8-ribityllumazine synthase.